The sequence spans 1162 residues: Lysine-specific demethylase 2A (1162 aa).

At Ser-28 the chain carries Phosphoserine. Residues 148 to 316 enclose the JmjC domain; sequence FSHTRLENMV…MQLKIYNIED (169 aa). Thr-209 is a binding site for substrate. His-212 and Asp-214 together coordinate Fe cation. Lys-229 contacts substrate. Residue His-284 coordinates Fe cation. The disordered stretch occupies residues 367 to 389; the sequence is GLESGNGDEEAVDREPRRLSSRR. 2 positions are modified to phosphoserine: Ser-390 and Ser-394. Lys-505 is covalently cross-linked (Glycyl lysine isopeptide (Lys-Gly) (interchain with G-Cter in SUMO2)). The segment at 532–557 is disordered; the sequence is VPTIPITKPHTMKPAPRLTPVRPAAA. The residue at position 550 (Thr-550) is a Phosphothreonine. A Phosphoserine modification is found at Ser-558. The CXXC-type zinc finger occupies 564–610; sequence ARRRRVRCRKCKACVQGECGVCHYCRDMKKFGGPGRMKQSCVLRQCL. Zn(2+) is bound by residues Cys-571, Cys-574, Cys-577, Cys-582, Cys-585, Cys-588, Cys-604, Cys-609, Cys-620, and Cys-623. The PHD-type zinc-finger motif lies at 617–678; it reads SVTCSLCGEV…CWECPKCYQE (62 aa). Position 632 is a phosphothreonine (Thr-632). Zn(2+)-binding residues include Cys-642, Cys-645, His-650, Cys-653, Cys-672, and Cys-675. Ser-692 is subject to Phosphoserine. Residues 704-789 form a disordered region; that stretch reads PLRSCDEPLT…PSGKKELSEV (86 aa). Thr-713 is modified (phosphothreonine). Residues Ser-718 and Ser-731 each carry the phosphoserine modification. Basic and acidic residues-rich tracts occupy residues 746–757 and 771–789; these read SDHHSASRDERF and TMVREKENNPSGKKELSEV. Ser-825, Ser-832, Ser-869, and Ser-883 each carry phosphoserine. Residues 839-887 are disordered; sequence HCPARTPQRGDEEGLGGEEEEEEEEEEEDDSAEEGGAARLNGRGSWAQD. Residues 851 to 871 show a composition bias toward acidic residues; that stretch reads EGLGGEEEEEEEEEEEDDSAE. One can recognise an F-box domain in the interval 889–936; that stretch reads DESWMQREVWMSVFRYLSRRELCECMRVCKTWYKWCCDKRLWTKIDLS. LRR repeat units follow at residues 961 to 982 and 984 to 1010; these read WTNISKKQLTWLVNRLPGLKDL and LAGCSWSAVSALSTSSCPLLRTLDLRW. The residue at position 1020 (Arg-1020) is an ADP-ribosylarginine. 4 LRR repeats span residues 1048-1073, 1074-1103, 1104-1128, and 1129-1156; these read GLDITDATLRLIIRHMPLLSRLDLSH, CSHLTDQSSNLLTAVGSSTRYSLTELNMAG, CNKLTDQTLIYLRRIANVTLIDLRG, and CKQITRKACEHFISDLSINSLYCLSDEK.

It belongs to the JHDM1 histone demethylase family. In terms of assembly, interacts with CBX5/HP1A; the interaction promotes CBX5 localization to chromatin. The SKP1-KDM2A complex interacts with UBB. Part of a SCF (SKP1-cullin-F-box) protein ligase complex. Requires Fe(2+) as cofactor. Post-translationally, mono-ADP-ribosylated at Arg-1020 in response to DNA damage, leading to displacement from chromatin, resulting in increased dimethylation of histone H3 at 'Lys-36'. Widely expressed, with highest levels in brain, testis and ovary, followed by lung.

It localises to the nucleus. It is found in the nucleoplasm. Its subcellular location is the chromosome. The enzyme catalyses N(6),N(6)-dimethyl-L-lysyl(36)-[histone H3] + 2 2-oxoglutarate + 2 O2 = L-lysyl(36)-[histone H3] + 2 formaldehyde + 2 succinate + 2 CO2. Its function is as follows. Histone demethylase that specifically demethylates 'Lys-36' of histone H3, thereby playing a central role in histone code. Preferentially demethylates dimethylated H3 'Lys-36' residue while it has weak or no activity for mono- and tri-methylated H3 'Lys-36'. May also recognize and bind to some phosphorylated proteins and promote their ubiquitination and degradation. Required to maintain the heterochromatic state. Associates with centromeres and represses transcription of small non-coding RNAs that are encoded by the clusters of satellite repeats at the centromere. Required to sustain centromeric integrity and genomic stability, particularly during mitosis. Regulates circadian gene expression by repressing the transcriptional activator activity of CLOCK-BMAL1 heterodimer and RORA in a catalytically-independent manner. This chain is Lysine-specific demethylase 2A (KDM2A), found in Homo sapiens (Human).